Here is an 855-residue protein sequence, read N- to C-terminus: Vomeronasal type-2 receptor 26 (855 aa).

Residues 1 to 22 form the signal peptide; sequence MKLLTAFSPLVVLILFQEQISC. The Extracellular segment spans residues 23–595; sequence YYLTKYASSG…FLAHEDPLGT (573 aa). 2 N-linked (GlcNAc...) asparagine glycosylation sites follow: Asn-101 and Asn-295. The helical transmembrane segment at 596-616 threads the bilayer; sequence VLVSLAISLSAFSAMILGLFI. Residues 617-630 are Cytoplasmic-facing; it reads CYRETPIVRANNRN. Residues 631–651 traverse the membrane as a helical segment; that stretch reads LSYLLLISLKLCFSCSLMFIG. At 652 to 662 the chain is on the extracellular side; that stretch reads QPRTVTCVLRQ. Residues 663–683 traverse the membrane as a helical segment; the sequence is IIFGIVFSIVISAILAKTFIV. The Cytoplasmic portion of the chain corresponds to 684-706; that stretch reads VMAFKAIKPGSILKMGMVTRLSN. A helical membrane pass occupies residues 707 to 727; it reads AIVCCGSIIQVCICAVWLGTY. At 728–753 the chain is on the extracellular side; sequence PPFPDVDMHSEFGQIILWCNEGSTLA. Residues 754–774 traverse the membrane as a helical segment; that stretch reads FYCVLGYLGFLASLSLLIAFL. Over 775–786 the chain is Cytoplasmic; that stretch reads ARRLPDSFNEAK. The chain crosses the membrane as a helical span at residues 787–807; sequence TITFSMLVFCSVWISFVPAYL. Residues 808 to 814 lie on the Extracellular side of the membrane; it reads SSKGKTM. The chain crosses the membrane as a helical span at residues 815 to 835; the sequence is VAVEILSILASSAGLLGCIFL. Over 836-855 the chain is Cytoplasmic; sequence PKCYVILLKSGGHSRKKFFK.

This sequence belongs to the G-protein coupled receptor 3 family. As to expression, expressed in the basal epithelium of the vomeronasal organ. Located to vomeronasal sensory neurons that project their axons to six to ten glomeruli that reside in globally conserved areas within the caudal accessory olfactory bulb (AOB).

Its subcellular location is the cell membrane. In terms of biological role, putative pheromone receptor. The chain is Vomeronasal type-2 receptor 26 (Vmn2r26) from Mus musculus (Mouse).